We begin with the raw amino-acid sequence, 440 residues long: Chromosome partition protein MukF (440 aa).

The segment at 208-236 is leucine-zipper; sequence LDETSGNLRELQDTLNAAGDKLQSQLLRI.

The protein belongs to the MukF family. Interacts, and probably forms a ternary complex, with MukE and MukB via its C-terminal region. The complex formation is stimulated by calcium or magnesium. It is required for an interaction between MukE and MukB.

It localises to the cytoplasm. It is found in the nucleoid. In terms of biological role, involved in chromosome condensation, segregation and cell cycle progression. May participate in facilitating chromosome segregation by condensation DNA from both sides of a centrally located replisome during cell division. Not required for mini-F plasmid partitioning. Probably acts via its interaction with MukB and MukE. Overexpression results in anucleate cells. It has a calcium binding activity. The chain is Chromosome partition protein MukF from Histophilus somni (strain 2336) (Haemophilus somnus).